The sequence spans 80 residues: Exodeoxyribonuclease 7 small subunit (80 aa).

The protein belongs to the XseB family. Heterooligomer composed of large and small subunits.

It is found in the cytoplasm. It catalyses the reaction Exonucleolytic cleavage in either 5'- to 3'- or 3'- to 5'-direction to yield nucleoside 5'-phosphates.. Functionally, bidirectionally degrades single-stranded DNA into large acid-insoluble oligonucleotides, which are then degraded further into small acid-soluble oligonucleotides. This chain is Exodeoxyribonuclease 7 small subunit, found in Shigella sonnei (strain Ss046).